The chain runs to 147 residues: Small ribosomal subunit protein bS6m (147 aa).

Belongs to the bacterial ribosomal protein bS6 family. In terms of assembly, component of the mitochondrial ribosome small subunit (28S) which comprises a 12S rRNA and about 30 distinct proteins.

The protein resides in the mitochondrion. In Drosophila melanogaster (Fruit fly), this protein is Small ribosomal subunit protein bS6m (mRpS6).